Reading from the N-terminus, the 274-residue chain is Large ribosomal subunit protein uL2 (274 aa).

Residues 223 to 274 (VAMNPVDHPHGGGEGRTSGGRHPVSPWGMPTKGFKTRKNKSTDKYIVRRRNK) are disordered.

The protein belongs to the universal ribosomal protein uL2 family. In terms of assembly, part of the 50S ribosomal subunit. Forms a bridge to the 30S subunit in the 70S ribosome.

Its function is as follows. One of the primary rRNA binding proteins. Required for association of the 30S and 50S subunits to form the 70S ribosome, for tRNA binding and peptide bond formation. It has been suggested to have peptidyltransferase activity; this is somewhat controversial. Makes several contacts with the 16S rRNA in the 70S ribosome. The polypeptide is Large ribosomal subunit protein uL2 (Aliivibrio salmonicida (strain LFI1238) (Vibrio salmonicida (strain LFI1238))).